A 557-amino-acid polypeptide reads, in one-letter code: Arginine--tRNA ligase (557 aa).

Residues 128 to 138 carry the 'HIGH' region motif; it reads ANPTGPLHVGH.

Belongs to the class-I aminoacyl-tRNA synthetase family. Monomer.

It is found in the cytoplasm. It catalyses the reaction tRNA(Arg) + L-arginine + ATP = L-arginyl-tRNA(Arg) + AMP + diphosphate. The sequence is that of Arginine--tRNA ligase from Thiobacillus denitrificans (strain ATCC 25259 / T1).